The sequence spans 100 residues: Urease subunit gamma (100 aa).

Belongs to the urease gamma subunit family. As to quaternary structure, heterotrimer of UreA (gamma), UreB (beta) and UreC (alpha) subunits. Three heterotrimers associate to form the active enzyme.

It is found in the cytoplasm. The enzyme catalyses urea + 2 H2O + H(+) = hydrogencarbonate + 2 NH4(+). It functions in the pathway nitrogen metabolism; urea degradation; CO(2) and NH(3) from urea (urease route): step 1/1. The polypeptide is Urease subunit gamma (Methylibium petroleiphilum (strain ATCC BAA-1232 / LMG 22953 / PM1)).